An 893-amino-acid polypeptide reads, in one-letter code: Alanine--tRNA ligase (893 aa).

Zn(2+)-binding residues include His-575, His-579, Cys-677, and His-681.

It belongs to the class-II aminoacyl-tRNA synthetase family. Zn(2+) serves as cofactor.

Its subcellular location is the cytoplasm. It catalyses the reaction tRNA(Ala) + L-alanine + ATP = L-alanyl-tRNA(Ala) + AMP + diphosphate. Its function is as follows. Catalyzes the attachment of alanine to tRNA(Ala) in a two-step reaction: alanine is first activated by ATP to form Ala-AMP and then transferred to the acceptor end of tRNA(Ala). Also edits incorrectly charged Ser-tRNA(Ala) and Gly-tRNA(Ala) via its editing domain. The protein is Alanine--tRNA ligase of Synechococcus sp. (strain CC9311).